A 66-amino-acid polypeptide reads, in one-letter code: uncharacterized protein (66 aa).

A compositionally biased stretch (low complexity) spans 1 to 18 (MSTTSSSSTFSTRTASLS). Residues 1–22 (MSTTSSSSTFSTRTASLSQSYT) are disordered.

This is an uncharacterized protein from Schizosaccharomyces pombe (strain 972 / ATCC 24843) (Fission yeast).